Here is a 333-residue protein sequence, read N- to C-terminus: Ferrochelatase (333 aa).

Positions 202 and 284 each coordinate Fe cation.

Belongs to the ferrochelatase family.

It is found in the cytoplasm. The catalysed reaction is heme b + 2 H(+) = protoporphyrin IX + Fe(2+). It participates in porphyrin-containing compound metabolism; protoheme biosynthesis; protoheme from protoporphyrin-IX: step 1/1. Catalyzes the ferrous insertion into protoporphyrin IX. The sequence is that of Ferrochelatase from Francisella tularensis subsp. novicida (strain U112).